Consider the following 520-residue polypeptide: Fumarate hydratase, mitochondrial (520 aa).

The N-terminal 39 residues, 1–39, are a transit peptide targeting the mitochondrion; it reads MASVAHISTAKAIFRAGGLPCRRLITPTLTGLPLKTHRM. Substrate is bound by residues 153 to 155, 184 to 187, 194 to 196, and Thr-242; these read SGT, HPND, and SSN. His-243 (proton donor/acceptor) is an active-site residue. Ser-373 is a catalytic residue. Residues Ser-374 and 379 to 381 contribute to the substrate site; that span reads KVN.

This sequence belongs to the class-II fumarase/aspartase family. Fumarase subfamily. As to quaternary structure, homotetramer.

It is found in the mitochondrion matrix. Its subcellular location is the cytoplasm. The protein localises to the nucleus. The catalysed reaction is (S)-malate = fumarate + H2O. Its pathway is carbohydrate metabolism; tricarboxylic acid cycle; (S)-malate from fumarate: step 1/1. Its function is as follows. Catalyzes the reversible stereospecific interconversion of fumarate to L-malate. In mitochondrion, catalyzes the hydration of fumarate to L-malate in the tricarboxylic acid (TCA) cycle to facilitate a transition step in the production of energy in the form of NADH. In cytoplasm and nucleus, involved in DNA repair in response to DNA damage: following DNA double-strand breaks (DSBs), translocates from the cytosol to the nucleus and promotes DNA repair by catalyzing the dehydration of L-malate to fumarate. The sequence is that of Fumarate hydratase, mitochondrial (fum1) from Schizosaccharomyces pombe (strain 972 / ATCC 24843) (Fission yeast).